We begin with the raw amino-acid sequence, 357 residues long: Holliday junction branch migration complex subunit RuvB (357 aa).

The disordered stretch occupies residues 1–20 (MDDHDDSPVSPSFLKSDGEI). Residues 1 to 185 (MDDHDDSPVS…FGFTGHMDFY (185 aa)) are large ATPase domain (RuvB-L). Residues L24, R25, G66, K69, T70, S71, 132 to 134 (EDF), R175, Y185, and R222 contribute to the ATP site. T70 contacts Mg(2+). The small ATPAse domain (RuvB-S) stretch occupies residues 186-256 (EPGELLRILE…VARAALEVYD (71 aa)). A head domain (RuvB-H) region spans residues 259-357 (TLGLDRLDRA…TSQPTLDLFD (99 aa)). DNA is bound by residues R314 and R319.

It belongs to the RuvB family. In terms of assembly, homohexamer. Forms an RuvA(8)-RuvB(12)-Holliday junction (HJ) complex. HJ DNA is sandwiched between 2 RuvA tetramers; dsDNA enters through RuvA and exits via RuvB. An RuvB hexamer assembles on each DNA strand where it exits the tetramer. Each RuvB hexamer is contacted by two RuvA subunits (via domain III) on 2 adjacent RuvB subunits; this complex drives branch migration. In the full resolvosome a probable DNA-RuvA(4)-RuvB(12)-RuvC(2) complex forms which resolves the HJ.

The protein localises to the cytoplasm. The enzyme catalyses ATP + H2O = ADP + phosphate + H(+). Functionally, the RuvA-RuvB-RuvC complex processes Holliday junction (HJ) DNA during genetic recombination and DNA repair, while the RuvA-RuvB complex plays an important role in the rescue of blocked DNA replication forks via replication fork reversal (RFR). RuvA specifically binds to HJ cruciform DNA, conferring on it an open structure. The RuvB hexamer acts as an ATP-dependent pump, pulling dsDNA into and through the RuvAB complex. RuvB forms 2 homohexamers on either side of HJ DNA bound by 1 or 2 RuvA tetramers; 4 subunits per hexamer contact DNA at a time. Coordinated motions by a converter formed by DNA-disengaged RuvB subunits stimulates ATP hydrolysis and nucleotide exchange. Immobilization of the converter enables RuvB to convert the ATP-contained energy into a lever motion, pulling 2 nucleotides of DNA out of the RuvA tetramer per ATP hydrolyzed, thus driving DNA branch migration. The RuvB motors rotate together with the DNA substrate, which together with the progressing nucleotide cycle form the mechanistic basis for DNA recombination by continuous HJ branch migration. Branch migration allows RuvC to scan DNA until it finds its consensus sequence, where it cleaves and resolves cruciform DNA. This is Holliday junction branch migration complex subunit RuvB from Nocardia farcinica (strain IFM 10152).